A 270-amino-acid polypeptide reads, in one-letter code: Formamidopyrimidine-DNA glycosylase (270 aa).

Pro2 (schiff-base intermediate with DNA) is an active-site residue. The Proton donor role is filled by Glu3. Lys58 functions as the Proton donor; for beta-elimination activity in the catalytic mechanism. DNA is bound by residues His90, Arg109, and Arg152. The FPG-type zinc-finger motif lies at 237-270 (RVYGREGEPCHCGTVIRRRVDGGRSTFYCPKCQK). Arg260 functions as the Proton donor; for delta-elimination activity in the catalytic mechanism.

Belongs to the FPG family. As to quaternary structure, monomer. The cofactor is Zn(2+).

It carries out the reaction Hydrolysis of DNA containing ring-opened 7-methylguanine residues, releasing 2,6-diamino-4-hydroxy-5-(N-methyl)formamidopyrimidine.. The catalysed reaction is 2'-deoxyribonucleotide-(2'-deoxyribose 5'-phosphate)-2'-deoxyribonucleotide-DNA = a 3'-end 2'-deoxyribonucleotide-(2,3-dehydro-2,3-deoxyribose 5'-phosphate)-DNA + a 5'-end 5'-phospho-2'-deoxyribonucleoside-DNA + H(+). In terms of biological role, involved in base excision repair of DNA damaged by oxidation or by mutagenic agents. Acts as a DNA glycosylase that recognizes and removes damaged bases. Has a preference for oxidized purines, such as 7,8-dihydro-8-oxoguanine (8-oxoG). Has AP (apurinic/apyrimidinic) lyase activity and introduces nicks in the DNA strand. Cleaves the DNA backbone by beta-delta elimination to generate a single-strand break at the site of the removed base with both 3'- and 5'-phosphates. This Rhizorhabdus wittichii (strain DSM 6014 / CCUG 31198 / JCM 15750 / NBRC 105917 / EY 4224 / RW1) (Sphingomonas wittichii) protein is Formamidopyrimidine-DNA glycosylase.